The chain runs to 97 residues: Large ribosomal subunit protein eL21 (97 aa).

Residues 1-12 show a composition bias toward polar residues; it reads MPSSNGPRQATR. A disordered region spans residues 1 to 35; that stretch reads MPSSNGPRQATRNKLKNDARERGTSPPQRSIEEYD.

This sequence belongs to the eukaryotic ribosomal protein eL21 family.

The polypeptide is Large ribosomal subunit protein eL21 (Natronomonas pharaonis (strain ATCC 35678 / DSM 2160 / CIP 103997 / JCM 8858 / NBRC 14720 / NCIMB 2260 / Gabara) (Halobacterium pharaonis)).